Consider the following 275-residue polypeptide: Rhamnulose-1-phosphate aldolase (275 aa).

Residue E117 is part of the active site. The Zn(2+) site is built by H141, H143, and H212.

This sequence belongs to the aldolase class II family. RhaD subfamily. As to quaternary structure, homotetramer. Zn(2+) serves as cofactor.

The protein resides in the cytoplasm. It catalyses the reaction L-rhamnulose 1-phosphate = (S)-lactaldehyde + dihydroxyacetone phosphate. It functions in the pathway carbohydrate degradation; L-rhamnose degradation; glycerone phosphate from L-rhamnose: step 3/3. Catalyzes the reversible cleavage of L-rhamnulose-1-phosphate to dihydroxyacetone phosphate (DHAP) and L-lactaldehyde. The protein is Rhamnulose-1-phosphate aldolase of Salmonella heidelberg (strain SL476).